Here is a 362-residue protein sequence, read N- to C-terminus: Histidinol-phosphate aminotransferase 2 (362 aa).

Lysine 222 is modified (N6-(pyridoxal phosphate)lysine).

Belongs to the class-II pyridoxal-phosphate-dependent aminotransferase family. Histidinol-phosphate aminotransferase subfamily. Homodimer. Pyridoxal 5'-phosphate is required as a cofactor.

The catalysed reaction is L-histidinol phosphate + 2-oxoglutarate = 3-(imidazol-4-yl)-2-oxopropyl phosphate + L-glutamate. The protein operates within amino-acid biosynthesis; L-histidine biosynthesis; L-histidine from 5-phospho-alpha-D-ribose 1-diphosphate: step 7/9. This Carboxydothermus hydrogenoformans (strain ATCC BAA-161 / DSM 6008 / Z-2901) protein is Histidinol-phosphate aminotransferase 2.